The primary structure comprises 305 residues: tRNA-cytidine(32) 2-sulfurtransferase (305 aa).

Positions 1–20 (MTAVLPLPHPLADPAPRDPR) are disordered. The PP-loop motif signature appears at 59 to 64 (SGGKDS). Cys-134, Cys-137, and Cys-225 together coordinate [4Fe-4S] cluster. Positions 282–293 (DAPPDLAPDPGA) are enriched in low complexity. The interval 282-305 (DAPPDLAPDPGAWLTASDATHDSD) is disordered.

Belongs to the TtcA family. Homodimer. Mg(2+) is required as a cofactor. [4Fe-4S] cluster serves as cofactor.

The protein localises to the cytoplasm. It catalyses the reaction cytidine(32) in tRNA + S-sulfanyl-L-cysteinyl-[cysteine desulfurase] + AH2 + ATP = 2-thiocytidine(32) in tRNA + L-cysteinyl-[cysteine desulfurase] + A + AMP + diphosphate + H(+). It participates in tRNA modification. Functionally, catalyzes the ATP-dependent 2-thiolation of cytidine in position 32 of tRNA, to form 2-thiocytidine (s(2)C32). The sulfur atoms are provided by the cysteine/cysteine desulfurase (IscS) system. The chain is tRNA-cytidine(32) 2-sulfurtransferase from Xanthomonas oryzae pv. oryzae (strain PXO99A).